Here is a 399-residue protein sequence, read N- to C-terminus: Glutathione S-transferase LANCL1 (399 aa).

N-acetylalanine is present on Ala-2. Lys-142 is subject to N6-acetyllysine. Cys-276 contacts Zn(2+). Lys-317 serves as a coordination point for glutathione. Cys-322 and His-323 together coordinate Zn(2+). 364–367 (RTAD) contributes to the glutathione binding site.

Belongs to the LanC-like protein family. In terms of assembly, interacts with the C-terminal of STOM. Interacts with the EPS8 SH3 domain. Interaction with EPS8 is inhibited by glutathione binding. In terms of tissue distribution, detected in spinal cord (at protein level). Ubiquitous. Strongly expressed in brain, testis, alveolar macrophages and epithelial cells of the lung, kidney and intestine. Expression in brain increases during the first postnatal month and remaining high in adult.

It is found in the cytoplasm. The protein resides in the cell membrane. It catalyses the reaction RX + glutathione = an S-substituted glutathione + a halide anion + H(+). It carries out the reaction 1-chloro-2,4-dinitrobenzene + glutathione = 2,4-dinitrophenyl-S-glutathione + chloride + H(+). In terms of biological role, functions as a glutathione transferase. Catalyzes conjugation of the glutathione (GSH) to artificial substrates 1-chloro-2,4-dinitrobenzene (CDNB) and p-nitrophenyl acetate. Mitigates neuronal oxidative stress during normal postnatal development and in response to oxidative stresses probably through GSH antioxidant defense mechanism. May play a role in EPS8 signaling. Binds glutathione. This Mus musculus (Mouse) protein is Glutathione S-transferase LANCL1.